Consider the following 212-residue polypeptide: Large ribosomal subunit protein uL3 (212 aa).

Glutamine 153 carries the N5-methylglutamine modification.

Belongs to the universal ribosomal protein uL3 family. In terms of assembly, part of the 50S ribosomal subunit. Forms a cluster with proteins L14 and L19. Methylated by PrmB.

In terms of biological role, one of the primary rRNA binding proteins, it binds directly near the 3'-end of the 23S rRNA, where it nucleates assembly of the 50S subunit. The sequence is that of Large ribosomal subunit protein uL3 from Colwellia psychrerythraea (strain 34H / ATCC BAA-681) (Vibrio psychroerythus).